We begin with the raw amino-acid sequence, 481 residues long: Zinc metalloproteinase/disintegrin (481 aa).

Positions methionine 1–serine 20 are cleaved as a signal peptide. Residues isoleucine 21–proline 189 constitute a propeptide that is removed on maturation. At glutamate 190 the chain carries Pyrrolidone carboxylic acid (Glu). The Peptidase M12B domain maps to arginine 197 to proline 392. An L-amino acid tripeptide is bound at residue arginine 296–isoleucine 299. 3 cysteine pairs are disulfide-bonded: cysteine 308/cysteine 387, cysteine 349/cysteine 371, and cysteine 351/cysteine 354. Position 333 (histidine 333) interacts with Zn(2+). Glutamate 334 is a catalytic residue. 2 residues coordinate Zn(2+): histidine 337 and histidine 343. Serine 357 serves as a coordination point for an L-amino acid tripeptide. Residues leucine 393–alanine 410 constitute a propeptide that is removed on maturation. In terms of domain architecture, Disintegrin spans threonine 400 to glycine 481. Cystine bridges form between cysteine 414-cysteine 429, cysteine 416-cysteine 424, cysteine 423-cysteine 446, cysteine 437-cysteine 443, cysteine 442-cysteine 467, and cysteine 455-cysteine 474. Positions arginine 459–aspartate 461 match the Cell attachment site motif.

It belongs to the venom metalloproteinase (M12B) family. P-II subfamily. P-IIa sub-subfamily. In terms of assembly, monomer. The cofactor is Zn(2+). The N-terminus is blocked. Expressed by the venom gland.

The protein localises to the secreted. Its activity is regulated as follows. Inhibited by EDTA and 1,10-phenanthroline. Is also inhibited by endogenous tripeptide inhibitors pyroGlu-Asn-Trp, pyroGlu-Gln-Trp, and pyroGlu-Lys-Trp. Its function is as follows. Potent fibrinogenolytic protease which cleaves mainly the Aalpha chain of fibrinogen (FGA) and slightly the Bbeta (FGB) and the gamma (FGG) chains. May possess hemorrhagic activity. Compared to other SVMP, the substrate-binding pocket is relatively shallow. Is less susceptible to tripeptide inhibitors than TM-1 (AC U3KRG1) and TM-2. In terms of biological role, inhibits platelet aggregation induced by ADP, thrombin, platelet-activating factor and collagen. Acts by inhibiting fibrinogen interaction with platelet receptors GPIIb/GPIIIa (ITGA2B/ITGB3). This chain is Zinc metalloproteinase/disintegrin, found in Protobothrops mucrosquamatus (Taiwan habu).